The primary structure comprises 403 residues: Argininosuccinate synthase (403 aa).

10–18 lines the ATP pocket; sequence AYSGGLDTS. Tyr87 contributes to the L-citrulline binding site. Position 117 (Gly117) interacts with ATP. Thr119, Asn123, and Asp124 together coordinate L-aspartate. L-citrulline is bound at residue Asn123. L-citrulline is bound by residues Arg127, Ser175, Glu260, and Tyr272.

This sequence belongs to the argininosuccinate synthase family. Type 1 subfamily. As to quaternary structure, homotetramer.

It is found in the cytoplasm. The enzyme catalyses L-citrulline + L-aspartate + ATP = 2-(N(omega)-L-arginino)succinate + AMP + diphosphate + H(+). It functions in the pathway amino-acid biosynthesis; L-arginine biosynthesis; L-arginine from L-ornithine and carbamoyl phosphate: step 2/3. This chain is Argininosuccinate synthase, found in Bacillus subtilis (strain 168).